We begin with the raw amino-acid sequence, 576 residues long: Deformed epidermal autoregulatory factor 1 (576 aa).

Disordered stretches follow at residues 52–76, 189–215, and 309–362; these read VTSS…GGGN, AGGA…NPST, and ESAS…SGSG. 2 stretches are compositionally biased toward gly residues: residues 61 to 76 and 191 to 207; these read GSGG…GGGN and GASG…GGSS. Residues 210–291 enclose the SAND domain; sequence SENPSTQHNE…QSLIDEGTLT (82 aa). Residues 324 to 340 carry the Nuclear localization signal motif; that stretch reads RKRNQTDLDMESGPKRK. A compositionally biased stretch (low complexity) spans 345-362; it reads HSNNNNSNTNNNNTSGSG. Residues cysteine 521, cysteine 524, cysteine 532, cysteine 535, cysteine 541, cysteine 545, histidine 553, and cysteine 557 each contribute to the Zn(2+) site. The MYND-type zinc finger occupies 521–557; it reads CANCNREALAECSLCRKTPYCSEFCQRKDWNAHQVEC.

Its subcellular location is the nucleus. Functionally, transcription factor that binds the homeotic Deformed (Dfd) response element. High affinity binding sites contain at least 1 TTCG motif surrounded by additional TCG sequences. May be involved in the selective action of Dfd on these sites without binding directly to the Dfd protein. Requirement of DEAF1 activity may be a common feature of enhancers targeted by Dfd. The chain is Deformed epidermal autoregulatory factor 1 (Deaf1) from Drosophila melanogaster (Fruit fly).